The sequence spans 379 residues: UDP-N-acetylglucosamine--N-acetylmuramyl-(pentapeptide) pyrophosphoryl-undecaprenol N-acetylglucosamine transferase (379 aa).

UDP-N-acetyl-alpha-D-glucosamine-binding positions include 19 to 21 (TGG), Asn133, Arg174, Ser207, Ile261, and Gln306.

Belongs to the glycosyltransferase 28 family. MurG subfamily.

Its subcellular location is the cell inner membrane. It carries out the reaction di-trans,octa-cis-undecaprenyl diphospho-N-acetyl-alpha-D-muramoyl-L-alanyl-D-glutamyl-meso-2,6-diaminopimeloyl-D-alanyl-D-alanine + UDP-N-acetyl-alpha-D-glucosamine = di-trans,octa-cis-undecaprenyl diphospho-[N-acetyl-alpha-D-glucosaminyl-(1-&gt;4)]-N-acetyl-alpha-D-muramoyl-L-alanyl-D-glutamyl-meso-2,6-diaminopimeloyl-D-alanyl-D-alanine + UDP + H(+). It functions in the pathway cell wall biogenesis; peptidoglycan biosynthesis. In terms of biological role, cell wall formation. Catalyzes the transfer of a GlcNAc subunit on undecaprenyl-pyrophosphoryl-MurNAc-pentapeptide (lipid intermediate I) to form undecaprenyl-pyrophosphoryl-MurNAc-(pentapeptide)GlcNAc (lipid intermediate II). The polypeptide is UDP-N-acetylglucosamine--N-acetylmuramyl-(pentapeptide) pyrophosphoryl-undecaprenol N-acetylglucosamine transferase (Porphyromonas gingivalis (strain ATCC BAA-308 / W83)).